The sequence spans 64 residues: Large ribosomal subunit protein uL29 (64 aa).

It belongs to the universal ribosomal protein uL29 family.

The sequence is that of Large ribosomal subunit protein uL29 from Teredinibacter turnerae (strain ATCC 39867 / T7901).